An 853-amino-acid polypeptide reads, in one-letter code: Transcription factor macR (853 aa).

The segment at residues 18-45 (CIVCRRRKVRCGREQPECANCVRMKENC) is a DNA-binding region (zn(2)-C6 fungal-type). Disordered regions lie at residues 54–122 (ESTG…PYPT), 138–166 (ANAP…PTPS), 734–775 (ASDL…AGNK), and 833–853 (LGSQ…DFPG). Polar residues-rich tracts occupy residues 104-116 (PQVS…SPQR), 141-163 (PQIN…SLFP), and 738-752 (RATS…SSTT).

It is found in the nucleus. Functionally, transcription factor that regulates the expression of the gene cluster that mediates the biosynthesis of macrophorins, isoprenoid epoxycyclohexenones containing cyclized drimane moieties. The chain is Transcription factor macR from Penicillium terrestre.